A 524-amino-acid chain; its full sequence is Cytochrome P450 monooxygenase oblB (524 aa).

3 helical membrane passes run 18–38 (ILNAGIAIAGLSAAYAIGLVI), 225–245 (FHSGVVTLPLFMGLPWLIHLI), and 322–342 (VLIGSGTMTTAGTMCFLVYYI). Cys-466 contacts heme.

Belongs to the cytochrome P450 family. The cofactor is heme.

The protein resides in the membrane. The catalysed reaction is ophiobolin F + 4 reduced [NADPH--hemoprotein reductase] + 4 O2 = ophiobolin C + 4 oxidized [NADPH--hemoprotein reductase] + 6 H2O + 4 H(+). It participates in secondary metabolite biosynthesis; terpenoid biosynthesis. In terms of biological role, cytochrome P450 monooxygenase; part of the gene cluster that mediates the biosynthesis of the sesterterpenes ophiobolins, fungal phytotoxins with potential anti-cancer activities. The first step of the pathway is performed by the sesterterpene synthase oblA that possesses both prenyl transferase and terpene cyclase activity, converting isopentenyl diphosphate and dimethylallyl diphosphate into geranylfarnesyl diphosphate (GFPP) and further converting GFPP into ophiobolin F, respectively. Other sesterterpenoids (C(25) terpenoids) are found as minor products of oblA. The cytochrome P450 monooxygenase oblB then catalyzes a four-step oxidative transformation of ophiobolin F to yield ophiobolin C. The FAD-dependent oxidoreductase oblC might be involved in a later oxidation step that produces ophiobolin A. The protein is Cytochrome P450 monooxygenase oblB of Cochliobolus heterostrophus (strain C5 / ATCC 48332 / race O) (Southern corn leaf blight fungus).